A 363-amino-acid chain; its full sequence is Adenosine kinase (363 aa).

Alanine 185, isoleucine 188, and alanine 191 together coordinate Mg(2+). Aspartate 318 is a catalytic residue.

This sequence belongs to the carbohydrate kinase PfkB family. The cofactor is Mg(2+).

It catalyses the reaction adenosine + ATP = AMP + ADP + H(+). Its pathway is purine metabolism; AMP biosynthesis via salvage pathway; AMP from adenosine: step 1/1. ATP-dependent phosphorylation of adenosine and other related nucleoside analogs to monophosphate derivatives. It is a key purine metabolic enzyme in the opportunistic parasitic protozoan toxoplasma gondii as it cannot synthesize purines de novo. This chain is Adenosine kinase (AK), found in Toxoplasma gondii.